The primary structure comprises 429 residues: Small ribosomal subunit protein mS47 (429 aa).

Residues Glu-141, Gly-166, Glu-189, and Asp-197 each contribute to the substrate site.

Belongs to the enoyl-CoA hydratase/isomerase family. Mitochondrion-specific ribosomal protein mS47 subfamily. In terms of assembly, component of the mitochondrial small ribosomal subunit (mt-SSU). Mature yeast 74S mitochondrial ribosomes consist of a small (37S) and a large (54S) subunit. The 37S small subunit contains a 15S ribosomal RNA (15S mt-rRNA) and at least 32 different proteins. The 54S large subunit contains a 21S rRNA (21S mt-rRNA) and at least 45 different proteins. mS47/snr1 forms a protuberance of the yeast mitoribosome and retains a solvent-exposed cavity likely capable of accommodating a substrate, in accordance with it being an active enzyme as well as an integral constituent of the mitoribosome.

It localises to the mitochondrion. It carries out the reaction 3-hydroxy-2-methylpropanoyl-CoA + H2O = 3-hydroxy-2-methylpropanoate + CoA + H(+). Its pathway is amino-acid degradation; L-valine degradation. In terms of biological role, component of the mitochondrial ribosome (mitoribosome), a dedicated translation machinery responsible for the synthesis of mitochondrial genome-encoded proteins, including at least some of the essential transmembrane subunits of the mitochondrial respiratory chain. The mitoribosomes are attached to the mitochondrial inner membrane and translation products are cotranslationally integrated into the membrane. mS47/snr1 has enzymatic activity in vitro, and is able to catalyze the specific hydrolysis of 3-hydroxyisobutyryl-CoA (HIBYL-CoA). However, because the turnover rate of mS47/snr1 is only a fraction of that of the homologous mammalian enzyme, the physiological function of this activity remains unclear. Has an indirect role in endocytic membrane trafficking. The polypeptide is Small ribosomal subunit protein mS47 (snr1) (Schizosaccharomyces pombe (strain 972 / ATCC 24843) (Fission yeast)).